The primary structure comprises 473 residues: Bifunctional protein HldE (473 aa).

The ribokinase stretch occupies residues 1–318 (MKLSMPRFDQ…RAIQREEGSE (318 aa)). Position 194-197 (194-197 (NLSE)) interacts with ATP. Asp-263 is an active-site residue. The cytidylyltransferase stretch occupies residues 343 to 473 (FTNGCFDILH…TAIVEKIRKH (131 aa)).

In the N-terminal section; belongs to the carbohydrate kinase PfkB family. The protein in the C-terminal section; belongs to the cytidylyltransferase family. Homodimer.

It carries out the reaction D-glycero-beta-D-manno-heptose 7-phosphate + ATP = D-glycero-beta-D-manno-heptose 1,7-bisphosphate + ADP + H(+). The catalysed reaction is D-glycero-beta-D-manno-heptose 1-phosphate + ATP + H(+) = ADP-D-glycero-beta-D-manno-heptose + diphosphate. It participates in nucleotide-sugar biosynthesis; ADP-L-glycero-beta-D-manno-heptose biosynthesis; ADP-L-glycero-beta-D-manno-heptose from D-glycero-beta-D-manno-heptose 7-phosphate: step 1/4. Its pathway is nucleotide-sugar biosynthesis; ADP-L-glycero-beta-D-manno-heptose biosynthesis; ADP-L-glycero-beta-D-manno-heptose from D-glycero-beta-D-manno-heptose 7-phosphate: step 3/4. In terms of biological role, catalyzes the phosphorylation of D-glycero-D-manno-heptose 7-phosphate at the C-1 position to selectively form D-glycero-beta-D-manno-heptose-1,7-bisphosphate. Its function is as follows. Catalyzes the ADP transfer from ATP to D-glycero-beta-D-manno-heptose 1-phosphate, yielding ADP-D-glycero-beta-D-manno-heptose. The polypeptide is Bifunctional protein HldE (Pseudomonas entomophila (strain L48)).